The primary structure comprises 35 residues: Anti-H(O) lectin 3 (35 aa).

This sequence belongs to the leguminous lectin family. In terms of assembly, homodimer. Post-translationally, highly glycosylated.

Functionally, binds lactose or galactose. The protein is Anti-H(O) lectin 3 of Ulex europaeus (Furze).